We begin with the raw amino-acid sequence, 129 residues long: Small ribosomal subunit protein uS9 (129 aa).

Belongs to the universal ribosomal protein uS9 family.

The polypeptide is Small ribosomal subunit protein uS9 (Wolinella succinogenes (strain ATCC 29543 / DSM 1740 / CCUG 13145 / JCM 31913 / LMG 7466 / NCTC 11488 / FDC 602W) (Vibrio succinogenes)).